A 480-amino-acid polypeptide reads, in one-letter code: Aromatic-L-amino-acid decarboxylase (480 aa).

N6-(pyridoxal phosphate)lysine is present on K292.

It belongs to the group II decarboxylase family. Pyridoxal 5'-phosphate is required as a cofactor.

The catalysed reaction is L-tryptophan + H(+) = tryptamine + CO2. It carries out the reaction L-phenylalanine + H(+) = 2-phenylethylamine + CO2. The enzyme catalyses 5-hydroxy-L-tryptophan + H(+) = serotonin + CO2. It catalyses the reaction L-dopa + H(+) = dopamine + CO2. Functionally, involved in bacillamide C biosynthesis. Catalyzes the decarboxylation of L-tryptophan to tryptamine. The tryptamine obtained is then probably incorporated into the bacillamide C peptide, which is derived from the amino acids alanine, cysteine and tryptophan through nonribosomal peptide synthetase (NRPS) biosynthesis strategy. L-tryptophan is the best substrate, but the enzyme displays broad substrate specificity for various aromatic amino acids in vitro and it can also catalyze the decarboxylation of L-phenylalanine, 5-hydroxy-L-tryptophan (L-HTP) and L-DOPA, with lower efficiency. Exhibits weak activity with L-tyrosine. The polypeptide is Aromatic-L-amino-acid decarboxylase (Bacillus atrophaeus).